We begin with the raw amino-acid sequence, 201 residues long: ATP-dependent Clp protease proteolytic subunit (201 aa).

The active-site Nucleophile is the Ser105. Residue His130 is part of the active site.

It belongs to the peptidase S14 family. Fourteen ClpP subunits assemble into 2 heptameric rings which stack back to back to give a disk-like structure with a central cavity, resembling the structure of eukaryotic proteasomes.

It localises to the cytoplasm. It carries out the reaction Hydrolysis of proteins to small peptides in the presence of ATP and magnesium. alpha-casein is the usual test substrate. In the absence of ATP, only oligopeptides shorter than five residues are hydrolyzed (such as succinyl-Leu-Tyr-|-NHMec, and Leu-Tyr-Leu-|-Tyr-Trp, in which cleavage of the -Tyr-|-Leu- and -Tyr-|-Trp bonds also occurs).. Functionally, cleaves peptides in various proteins in a process that requires ATP hydrolysis. Has a chymotrypsin-like activity. Plays a major role in the degradation of misfolded proteins. The protein is ATP-dependent Clp protease proteolytic subunit of Acinetobacter baylyi (strain ATCC 33305 / BD413 / ADP1).